The primary structure comprises 546 residues: Serine/threonine-protein kinase Chk2 (546 aa).

The segment at 1–70 (MKSHHQSHSS…SSHSSSGTLS (70 aa)) is disordered. Low complexity predominate over residues 8–70 (HSSTSSKAHD…SSHSSSGTLS (63 aa)). At threonine 68 the chain carries Phosphothreonine; by MAP3K20. Residue serine 71 is modified to Phosphoserine; by PLK3. The residue at position 77 (threonine 77) is a Phosphothreonine; by ATM and MAP3K20. Residue serine 82 is modified to Phosphoserine; by PLK3. Positions 117–179 (YWFGRDKSCE…NGTFVNTELI (63 aa)) constitute an FHA domain. The 267-residue stretch at 224-490 (YIMSKTLGSG…TEEALNHPWL (267 aa)) folds into the Protein kinase domain. Residues 231 to 238 (GSGACGEV), lysine 253, and 306 to 312 (ELMEGGE) each bind ATP. The active-site Proton acceptor is aspartate 351. Residues 355–356 (EN) and aspartate 372 contribute to the ATP site. The tract at residues 372-398 (DFGQSKILGETSLMRTLCGTPTYLAPE) is T-loop/activation segment. Position 383 is a phosphoserine; by autocatalysis (serine 383). Threonine 387 and threonine 391 each carry phosphothreonine; by autocatalysis. At serine 460 the chain carries Phosphoserine.

This sequence belongs to the protein kinase superfamily. CAMK Ser/Thr protein kinase family. CHK2 subfamily. In terms of assembly, homodimer. Homodimerization is part of the activation process but the dimer may dissociate following activation. Interacts with PML. Interacts with TP53. Interacts with RB1; phosphorylates RB1. Interacts with BRCA1. Interacts (phosphorylated at Thr-68) with MDC1; requires ATM-mediated phosphorylation of CHEK2. Interacts with TP53BP1; modulates CHEK2 phosphorylation at Thr-68 in response to ionizing radiation. Interacts with CDC25A; phosphorylates CDC25A and mediates its degradation in response to ionizing radiation. Interacts with CUL1; mediates CHEK2 ubiquitination and regulation. Interacts with CDKN2AIP. Interacts (via protein kinase domain) with CCAR2 (via N-terminus). Interacts with SIRT1. The cofactor is Mg(2+). In terms of processing, phosphorylated. Phosphorylated at Ser-82 by PLK3 in response to DNA damage, promoting phosphorylation at Thr-77 by ATM and the G2/M transition checkpoint. Phosphorylation at Thr-77 induces homodimerization. Autophosphorylates at Thr-387 and Thr-391 in the T-loop/activation segment upon dimerization to become fully active. DNA damage-induced autophosphorylation at Ser-383 induces CUL1-mediated ubiquitination and regulates the pro-apoptotic function. Phosphorylation at Ser-460 also regulates ubiquitination. Phosphorylated by PLK4. Post-translationally, ubiquitinated. CUL1-mediated ubiquitination regulates the pro-apoptotic function. Ubiquitination may also regulate protein stability. Ubiquitinated by RNF8 via 'Lys-48'-linked ubiquitination. As to expression, ubiquitously expressed with higher levels in the thymus, spleen and colon (at protein level).

The protein localises to the nucleus. The protein resides in the PML body. Its subcellular location is the nucleoplasm. The catalysed reaction is L-seryl-[protein] + ATP = O-phospho-L-seryl-[protein] + ADP + H(+). It catalyses the reaction L-threonyl-[protein] + ATP = O-phospho-L-threonyl-[protein] + ADP + H(+). Activated through phosphorylation at Thr-68 by ATM in response to DNA double-strand breaks. Activation is modulated by several mediators including MDC1 and TP53BP1. Induces homodimerization with exchange of the T-loop/activation segment between protomers and transphosphorylation of the protomers. The autophosphorylated kinase dimer is fully active. Negatively regulated by PPM1D through dephosphorylation of Thr-68. In terms of biological role, serine/threonine-protein kinase which is required for checkpoint-mediated cell cycle arrest, activation of DNA repair and apoptosis in response to the presence of DNA double-strand breaks. May also negatively regulate cell cycle progression during unperturbed cell cycles. Following activation, phosphorylates numerous effectors preferentially at the consensus sequence [L-X-R-X-X-S/T]. Regulates cell cycle checkpoint arrest through phosphorylation of CDC25A, CDC25B and CDC25C, inhibiting their activity. Inhibition of CDC25 phosphatase activity leads to increased inhibitory tyrosine phosphorylation of CDK-cyclin complexes and blocks cell cycle progression. May also phosphorylate NEK6 which is involved in G2/M cell cycle arrest. Regulates DNA repair through phosphorylation of BRCA2, enhancing the association of RAD51 with chromatin which promotes DNA repair by homologous recombination. Also stimulates the transcription of genes involved in DNA repair (including BRCA2) through the phosphorylation and activation of the transcription factor FOXM1. Regulates apoptosis through the phosphorylation of p53/TP53, MDM4 and PML. Phosphorylation of p53/TP53 at 'Ser-20' by CHEK2 may alleviate inhibition by MDM2, leading to accumulation of active p53/TP53. Phosphorylation of MDM4 may also reduce degradation of p53/TP53. Also controls the transcription of pro-apoptotic genes through phosphorylation of the transcription factor E2F1. Tumor suppressor, it may also have a DNA damage-independent function in mitotic spindle assembly by phosphorylating BRCA1. Its absence may be a cause of the chromosomal instability observed in some cancer cells. Promotes the CCAR2-SIRT1 association and is required for CCAR2-mediated SIRT1 inhibition. Under oxidative stress, promotes ATG7 ubiquitination by phosphorylating the E3 ubiquitin ligase TRIM32 at 'Ser-56' leading to positive regulation of the autophagosme assembly. The sequence is that of Serine/threonine-protein kinase Chk2 from Mus musculus (Mouse).